A 328-amino-acid polypeptide reads, in one-letter code: Aspartate carbamoyltransferase catalytic subunit (328 aa).

Arg55 and Thr56 together coordinate carbamoyl phosphate. Lys83 lines the L-aspartate pocket. 3 residues coordinate carbamoyl phosphate: Arg105, His135, and Gln138. Residues Arg176 and Arg230 each coordinate L-aspartate. Positions 271 and 272 each coordinate carbamoyl phosphate.

Belongs to the aspartate/ornithine carbamoyltransferase superfamily. ATCase family. Heterododecamer (2C3:3R2) of six catalytic PyrB chains organized as two trimers (C3), and six regulatory PyrI chains organized as three dimers (R2).

It catalyses the reaction carbamoyl phosphate + L-aspartate = N-carbamoyl-L-aspartate + phosphate + H(+). Its pathway is pyrimidine metabolism; UMP biosynthesis via de novo pathway; (S)-dihydroorotate from bicarbonate: step 2/3. Catalyzes the condensation of carbamoyl phosphate and aspartate to form carbamoyl aspartate and inorganic phosphate, the committed step in the de novo pyrimidine nucleotide biosynthesis pathway. The sequence is that of Aspartate carbamoyltransferase catalytic subunit from Streptomyces griseus subsp. griseus (strain JCM 4626 / CBS 651.72 / NBRC 13350 / KCC S-0626 / ISP 5235).